We begin with the raw amino-acid sequence, 91 residues long: MPNIKSAKRRVKISERNRLINKAYKTRMKNSIKKVLLALSEGKTKEEVEQLYKIAQSAIDKAAKIGAVHKNEAARRKSRLMSKINKHFAIE.

The protein belongs to the bacterial ribosomal protein bS20 family.

Functionally, binds directly to 16S ribosomal RNA. This Thermosipho melanesiensis (strain DSM 12029 / CIP 104789 / BI429) protein is Small ribosomal subunit protein bS20.